The chain runs to 337 residues: MYIKELTETDEEKRERSVEDNVDDGDKAVLVSRGNVIVLTTKRALVGVGARALFYPTLVYNVVRNKLESEFRWWDRVAEFILLGAVPFPSDVPQLKELGVCGVITLNEPYETLVPSSLYKSYCIDHLVIATRDYCFAPSMEAICQAVEFIHRNASLGKTTYVHCKAGRGRSTTIVICYLVQHKNMTPEAAYSYVRSIRPRVLLAAAQWKAVVEYYHVKVLNTQSCLTDATSALIPRNVKQVCSGNVVVFDDGSMVVVTHSDLEGYNDDDSRSRRSVKVNGNELWAAAADLSMVYRVKVVGQAAMARISCLWLGLREDQKLSGKNLSMGGISVDISVY.

Positions 1–20 are disordered; that stretch reads MYIKELTETDEEKRERSVED. 2 residues coordinate substrate: tyrosine 55 and aspartate 133. The 148-residue stretch at 73-220 folds into the Tyrosine-protein phosphatase domain; that stretch reads WWDRVAEFIL…VVEYYHVKVL (148 aa). Cysteine 164 acts as the Phosphocysteine intermediate in catalysis. Residues 164–170 carry the Glucan phosphatase signature motif CXAGXGR motif; it reads CKAGRGR. 165-170 is a binding site for substrate; it reads KAGRGR.

The protein belongs to the protein-tyrosine phosphatase family. Non-receptor class dual specificity subfamily. Expressed in stems, roots, flowers, mature seeds and leaves.

The catalysed reaction is O-phospho-L-seryl-[protein] + H2O = L-seryl-[protein] + phosphate. It catalyses the reaction O-phospho-L-threonyl-[protein] + H2O = L-threonyl-[protein] + phosphate. It carries out the reaction O-phospho-L-tyrosyl-[protein] + H2O = L-tyrosyl-[protein] + phosphate. The enzyme catalyses a 1,2-diacyl-sn-glycero-3-phospho-(1'-sn-glycero-3'-phosphate) + H2O = a 1,2-diacyl-sn-glycero-3-phospho-(1'-sn-glycerol) + phosphate. It functions in the pathway phospholipid metabolism; phosphatidylglycerol biosynthesis; phosphatidylglycerol from CDP-diacylglycerol: step 2/2. Its function is as follows. Exhibits phosphatidylglycerophosphate phosphatase activity. Involved in root growth and columella cells organization. May possess protein phosphatase activity. In Arabidopsis thaliana (Mouse-ear cress), this protein is Phosphatidylglycerophosphate phosphatase PTPMT1.